Here is a 345-residue protein sequence, read N- to C-terminus: S-adenosylmethionine:tRNA ribosyltransferase-isomerase (345 aa).

It belongs to the QueA family. As to quaternary structure, monomer.

The protein resides in the cytoplasm. It carries out the reaction 7-aminomethyl-7-carbaguanosine(34) in tRNA + S-adenosyl-L-methionine = epoxyqueuosine(34) in tRNA + adenine + L-methionine + 2 H(+). The protein operates within tRNA modification; tRNA-queuosine biosynthesis. Functionally, transfers and isomerizes the ribose moiety from AdoMet to the 7-aminomethyl group of 7-deazaguanine (preQ1-tRNA) to give epoxyqueuosine (oQ-tRNA). The sequence is that of S-adenosylmethionine:tRNA ribosyltransferase-isomerase from Shewanella putrefaciens (strain CN-32 / ATCC BAA-453).